The following is a 129-amino-acid chain: uncharacterized protein (129 aa).

The next 3 membrane-spanning stretches (helical) occupy residues 49 to 69 (LWSLYSMMLHILGFLANIVGV), 72 to 92 (FTIFAFSPADIAVYHFFNLIF), and 101 to 118 (YFNCVILCTCVSVYNLLQ).

The protein resides in the membrane. This is an uncharacterized protein from Saccharomyces cerevisiae (strain ATCC 204508 / S288c) (Baker's yeast).